Here is a 662-residue protein sequence, read N- to C-terminus: MQYTPFASDIELPFYIALASLKINHDKLDDSARKVLGLYELRPSDAPNASCRIQIHGNALTSDEVPSTYYRAEGMIKNVNTIEEYAKADKMGMLQQSGETIWNAINNGTIYSCPSLLSAFVILSYADLKKYKFHYWFAFPALHSDPSWTPLEEGCEGAQAHRLPSVESSALARSVQEWARVVDAPQRGFFLARRVRMRDDDTVSWKIASLSSYEDGFFKHAEFADCFTCFVDPSNYEEAPGWMLRNLLVLVKRRWGLTKVQILRYRDGPSPRDCGRSIVVTLRLKTSQLPDGGVKDDRMPKVTGWERNPSGKLTGRIVDLTEQLDPKRLADQSVDLNLKLMKWRISPNLDLEKIKGTKCLLLGAGTLGSYVARNLMAWGVRKITFVDNGSVSFSNPVRQPLFNFADCLDGGAKKAYRASQALSEIYPGVESVGHVLAVPMAGHPVLDAEKTKADFEVLKGLIDAHDVIILLMDTRESRWLPTVMGKAAGKIVMNAALGFDTFVVMRHGVTNNEHPEEELGCYFCNDVVAPMNSQKDQTLDQQCTVTRPGVAAIASALLVELLVSLLQHPLGAAAGAPQTPNNTQNDHPLGVIPHQIRGFLSTFENVSVVGRSYKCCSACSRPVIDEYKKNGWNFVQKALNEVGYVEELSGLKEVCHPPLSIA.

The GXGXXG motif motif lies at 363-368 (GAGTLG). Cys-543 functions as the Glycyl thioester intermediate in the catalytic mechanism.

Belongs to the ATG7 family. In terms of assembly, homodimer.

It is found in the cytoplasm. Its subcellular location is the preautophagosomal structure. Its function is as follows. E1-like activating enzyme involved in the 2 ubiquitin-like systems required for cytoplasm to vacuole transport (Cvt) and autophagy. Activates atg12 for its conjugation with atg5 and atg8 for its conjugation with phosphatidylethanolamine. Both systems are needed for the atg8 association to Cvt vesicles and autophagosomes membranes. Autophagy is essential for maintenance of amino acid levels and protein synthesis under nitrogen starvation. Required for selective autophagic degradation of the nucleus (nucleophagy) as well as for mitophagy which contributes to regulate mitochondrial quantity and quality by eliminating the mitochondria to a basal level to fulfill cellular energy requirements and preventing excess ROS production. Plays a role in the regulation of filamentous growth and chronological longevity. The polypeptide is Ubiquitin-like modifier-activating enzyme atg7 (atg7) (Emericella nidulans (strain FGSC A4 / ATCC 38163 / CBS 112.46 / NRRL 194 / M139) (Aspergillus nidulans)).